A 406-amino-acid chain; its full sequence is Cysteine desulfurase (406 aa).

An N6-(pyridoxal phosphate)lysine modification is found at K226. The active-site Cysteine persulfide intermediate is the C364.

It belongs to the class-V pyridoxal-phosphate-dependent aminotransferase family. Csd subfamily. As to quaternary structure, homodimer. Interacts with SufE and the SufBCD complex composed of SufB, SufC and SufD. The interaction with SufE is required to mediate the direct transfer of the sulfur atom from the S-sulfanylcysteine. It depends on pyridoxal 5'-phosphate as a cofactor.

Its subcellular location is the cytoplasm. It catalyses the reaction (sulfur carrier)-H + L-cysteine = (sulfur carrier)-SH + L-alanine. The enzyme catalyses L-selenocysteine + AH2 = hydrogenselenide + L-alanine + A + H(+). Its pathway is cofactor biosynthesis; iron-sulfur cluster biosynthesis. Its function is as follows. Cysteine desulfurases mobilize the sulfur from L-cysteine to yield L-alanine, an essential step in sulfur metabolism for biosynthesis of a variety of sulfur-containing biomolecules. Component of the suf operon, which is activated and required under specific conditions such as oxidative stress and iron limitation. Acts as a potent selenocysteine lyase in vitro, that mobilizes selenium from L-selenocysteine. Selenocysteine lyase activity is however unsure in vivo. The sequence is that of Cysteine desulfurase from Klebsiella pneumoniae (strain 342).